Consider the following 337-residue polypeptide: DNA-directed RNA polymerase subunit alpha (337 aa).

The segment at M1–E233 is alpha N-terminal domain (alpha-NTD). The alpha C-terminal domain (alpha-CTD) stretch occupies residues I267 to E337.

It belongs to the RNA polymerase alpha chain family. In plastids the minimal PEP RNA polymerase catalytic core is composed of four subunits: alpha, beta, beta', and beta''. When a (nuclear-encoded) sigma factor is associated with the core the holoenzyme is formed, which can initiate transcription.

Its subcellular location is the plastid. It is found in the chloroplast. The enzyme catalyses RNA(n) + a ribonucleoside 5'-triphosphate = RNA(n+1) + diphosphate. DNA-dependent RNA polymerase catalyzes the transcription of DNA into RNA using the four ribonucleoside triphosphates as substrates. This is DNA-directed RNA polymerase subunit alpha from Eucalyptus globulus subsp. globulus (Tasmanian blue gum).